Consider the following 297-residue polypeptide: 1D-myo-inositol 2-acetamido-2-deoxy-alpha-D-glucopyranoside deacetylase (297 aa).

The Zn(2+) site is built by H11, D14, and H154.

Belongs to the MshB deacetylase family. Zn(2+) serves as cofactor.

The enzyme catalyses 1D-myo-inositol 2-acetamido-2-deoxy-alpha-D-glucopyranoside + H2O = 1D-myo-inositol 2-amino-2-deoxy-alpha-D-glucopyranoside + acetate. Catalyzes the deacetylation of 1D-myo-inositol 2-acetamido-2-deoxy-alpha-D-glucopyranoside (GlcNAc-Ins) in the mycothiol biosynthesis pathway. The protein is 1D-myo-inositol 2-acetamido-2-deoxy-alpha-D-glucopyranoside deacetylase of Tsukamurella paurometabola (strain ATCC 8368 / DSM 20162 / CCUG 35730 / CIP 100753 / JCM 10117 / KCTC 9821 / NBRC 16120 / NCIMB 702349 / NCTC 13040) (Corynebacterium paurometabolum).